The sequence spans 211 residues: Probable nicotinate-nucleotide adenylyltransferase (211 aa).

This sequence belongs to the NadD family.

It carries out the reaction nicotinate beta-D-ribonucleotide + ATP + H(+) = deamido-NAD(+) + diphosphate. The protein operates within cofactor biosynthesis; NAD(+) biosynthesis; deamido-NAD(+) from nicotinate D-ribonucleotide: step 1/1. In terms of biological role, catalyzes the reversible adenylation of nicotinate mononucleotide (NaMN) to nicotinic acid adenine dinucleotide (NaAD). This Cellvibrio japonicus (strain Ueda107) (Pseudomonas fluorescens subsp. cellulosa) protein is Probable nicotinate-nucleotide adenylyltransferase.